Reading from the N-terminus, the 152-residue chain is Protein-export protein SecB (152 aa).

This sequence belongs to the SecB family. Homotetramer, a dimer of dimers. One homotetramer interacts with 1 SecA dimer.

The protein resides in the cytoplasm. Functionally, one of the proteins required for the normal export of preproteins out of the cell cytoplasm. It is a molecular chaperone that binds to a subset of precursor proteins, maintaining them in a translocation-competent state. It also specifically binds to its receptor SecA. The chain is Protein-export protein SecB from Acinetobacter baumannii (strain AB307-0294).